A 519-amino-acid polypeptide reads, in one-letter code: Fatty acid--[acyl-carrier-protein] ligase ScoC (519 aa).

Position 167 (Thr167) interacts with Mg(2+). 2 residues coordinate ATP: Ile216 and Thr312. A Mg(2+)-binding site is contributed by Glu313. ATP is bound by residues Asp394 and Lys411.

It belongs to the ATP-dependent AMP-binding enzyme family. Requires Mg(2+) as cofactor.

It catalyses the reaction a medium-chain fatty acid + holo-[ACP] + ATP = a medium-chain fatty acyl-[ACP] + AMP + diphosphate. The enzyme catalyses a medium-chain fatty acid + ATP + H(+) = a medium-chain fatty acyl-AMP + diphosphate. The catalysed reaction is a medium-chain fatty acyl-AMP + holo-[ACP] = a medium-chain fatty acyl-[ACP] + AMP + H(+). It carries out the reaction octanoate + holo-[ACP] + ATP = octanoyl-[ACP] + AMP + diphosphate. It catalyses the reaction octanoate + ATP + H(+) = octanoyl-AMP + diphosphate. The enzyme catalyses octanoyl-AMP + holo-[ACP] = octanoyl-[ACP] + AMP + H(+). The catalysed reaction is a (2E)-enoyl fatty acid + holo-[ACP] + ATP = a (2E)-enoyl-[ACP] + AMP + diphosphate. It carries out the reaction a (2E)-enoyl fatty acid + ATP + H(+) = a (2E)-2-fatty-enoyl-AMP + diphosphate. It catalyses the reaction a (2E)-2-fatty-enoyl-AMP + holo-[ACP] = a (2E)-enoyl-[ACP] + AMP + H(+). The enzyme catalyses (2E)-2-butenoate + holo-[ACP] + ATP = (2E)-butenoyl-[ACP] + AMP + diphosphate. The catalysed reaction is (2E)-2-butenoate + ATP + H(+) = (2E)-but-2-enoyl-AMP + diphosphate. It carries out the reaction (2E)-but-2-enoyl-AMP + holo-[ACP] = (2E)-butenoyl-[ACP] + AMP + H(+). It catalyses the reaction a (3R)-3-isocyanyl-fatty acid + holo-[ACP] + ATP = a (3R)-3-isocyanyl-fatty acyl-[ACP] + AMP + diphosphate. The enzyme catalyses a (3R)-3-isocyanyl-fatty acid + ATP + H(+) = a (3R)-3-isocyanyl-fatty acyl-AMP + diphosphate. The catalysed reaction is a (3R)-3-isocyanyl-fatty acyl-AMP + holo-[ACP] = a (3R)-3-isocyanyl-fatty acyl-[ACP] + AMP + H(+). It carries out the reaction (3R)-3-isocyanylbutanoate + holo-[ACP] + ATP = (3R)-3-isocyanylbutanoyl-[ACP] + AMP + diphosphate. It catalyses the reaction (3R)-3-isocyanylbutanoate + ATP + H(+) = (3R)-3-isocyanylbutanoyl-AMP + diphosphate. The enzyme catalyses (3R)-3-isocyanylbutanoyl-AMP + holo-[ACP] = (3R)-3-isocyanylbutanoyl-[ACP] + AMP + H(+). Acyl:acyl-carrier protein ligase involved in the biosynthesis of a unique class of isonitrile lipopeptides (INLPs). Shows a strong preference for fatty acids with a short/medium-chain length (C4-C8) in vitro, and accepts alpha,beta-unsaturated fatty acids such as crotonate, which seems to be a physiological substrate. Acts twice during the INLP pathway, catalyzing the activation of crotonate ((2E)-2-butenoate) as well as (3R)-3-isocyanylbutanoate as acyl-adenylates (acyl-AMP), and then the acyl transfer to the dedicated acyl-carrier protein ScoB. The chain is Fatty acid--[acyl-carrier-protein] ligase ScoC from Streptomyces coeruleorubidus.